Here is a 431-residue protein sequence, read N- to C-terminus: Glutamate-1-semialdehyde 2,1-aminomutase (431 aa).

Lys-269 bears the N6-(pyridoxal phosphate)lysine mark.

This sequence belongs to the class-III pyridoxal-phosphate-dependent aminotransferase family. HemL subfamily. In terms of assembly, homodimer. It depends on pyridoxal 5'-phosphate as a cofactor.

Its subcellular location is the cytoplasm. The catalysed reaction is (S)-4-amino-5-oxopentanoate = 5-aminolevulinate. It participates in porphyrin-containing compound metabolism; protoporphyrin-IX biosynthesis; 5-aminolevulinate from L-glutamyl-tRNA(Glu): step 2/2. It functions in the pathway porphyrin-containing compound metabolism; chlorophyll biosynthesis. This Chlorobium luteolum (strain DSM 273 / BCRC 81028 / 2530) (Pelodictyon luteolum) protein is Glutamate-1-semialdehyde 2,1-aminomutase.